A 420-amino-acid chain; its full sequence is Zinc finger and BTB domain-containing protein 42 (420 aa).

The 69-residue stretch at 24 to 92 (CDCTVLVGDA…MYEGRLDLHS (69 aa)) folds into the BTB domain. 2 disordered regions span residues 174 to 204 (PPSWQVSEESSGALDLSLKPGPRPEQAHPPC) and 216 to 248 (QGAQPLVKAEQDSFSEQDSSSPQSADRSPPPVC). Low complexity predominate over residues 227–241 (DSFSEQDSSSPQSAD). 4 consecutive C2H2-type zinc fingers follow at residues 292 to 314 (CICPLCCKLFPSTHALQPHLSAH), 332 to 354 (PTCPLCSKTFSCTYTLKRHERTH), 360 to 382 (YTCVQCGKSFQYSHNLSRHAVVH), and 388 to 411 (HACRWCERRFTQSGDLYRHVRKFH).

This sequence belongs to the krueppel C2H2-type zinc-finger protein family. ZBTB18 subfamily.

The protein resides in the cytoplasm. It is found in the nucleus. The protein localises to the nucleoplasm. In terms of biological role, transcriptional repressor. Specifically binds DNA and probably acts by recruiting chromatin remodeling multiprotein complexes. The protein is Zinc finger and BTB domain-containing protein 42 (Zbtb42) of Rattus norvegicus (Rat).